Reading from the N-terminus, the 938-residue chain is Protein translocase subunit SecA (938 aa).

ATP is bound by residues glutamine 90, 108–112 (GEGKT), and aspartate 504.

The protein belongs to the SecA family. Monomer and homodimer. Part of the essential Sec protein translocation apparatus which comprises SecA, SecYEG and auxiliary proteins SecDF. Other proteins may also be involved.

The protein localises to the cell inner membrane. It localises to the cellular thylakoid membrane. Its subcellular location is the cytoplasm. The catalysed reaction is ATP + H2O + cellular proteinSide 1 = ADP + phosphate + cellular proteinSide 2.. Its function is as follows. Part of the Sec protein translocase complex. Interacts with the SecYEG preprotein conducting channel. Has a central role in coupling the hydrolysis of ATP to the transfer of proteins into and across the cell membrane, serving as an ATP-driven molecular motor driving the stepwise translocation of polypeptide chains across the membrane. In terms of biological role, probably participates in protein translocation into and across both the cytoplasmic and thylakoid membranes in cyanobacterial cells. This Picosynechococcus sp. (strain ATCC 27264 / PCC 7002 / PR-6) (Agmenellum quadruplicatum) protein is Protein translocase subunit SecA.